We begin with the raw amino-acid sequence, 379 residues long: MSATLALTEQLIARASVTPDDQHCQQIMTERLAALGFDCETVASHGVTNLWAVKRGTDGRDGKLLAFAGHTDVVPTGPLEQWTSPPFVPAHRDGKLYGRGAADMKTSLAAFVVAAEEFVAAHPDHRGAIAFLITSDEEGPATDGTVKVVELLESRGERLDYCIVGEPTSTAELGDVVKNGRRGSMSGELIVKGVQGHIAYPHLAKNPIHLLAPALAELAAEQWDEGNEYFPPTTWQVSNLRAGTGATNVIPGHADLLFNFRFSTASTVEGLQARVHAILDKHQLDYTLKWTVSGLPFLTPRGELSNALEHAIRAETGLTTELSTTGGTSDGRFIARICPQVIEFGPPNGSIHKIDEHIEVRFVEPLKNVYRRVLEQLIA.

His70 contacts Zn(2+). The active site involves Asp72. Asp103 serves as a coordination point for Zn(2+). Glu137 functions as the Proton acceptor in the catalytic mechanism. Zn(2+) contacts are provided by Glu138, Glu166, and His352.

It belongs to the peptidase M20A family. DapE subfamily. As to quaternary structure, homodimer. It depends on Zn(2+) as a cofactor. Co(2+) serves as cofactor.

The catalysed reaction is N-succinyl-(2S,6S)-2,6-diaminopimelate + H2O = (2S,6S)-2,6-diaminopimelate + succinate. The protein operates within amino-acid biosynthesis; L-lysine biosynthesis via DAP pathway; LL-2,6-diaminopimelate from (S)-tetrahydrodipicolinate (succinylase route): step 3/3. In terms of biological role, catalyzes the hydrolysis of N-succinyl-L,L-diaminopimelic acid (SDAP), forming succinate and LL-2,6-diaminopimelate (DAP), an intermediate involved in the bacterial biosynthesis of lysine and meso-diaminopimelic acid, an essential component of bacterial cell walls. In Burkholderia multivorans (strain ATCC 17616 / 249), this protein is Succinyl-diaminopimelate desuccinylase.